A 354-amino-acid chain; its full sequence is S-adenosylmethionine:tRNA ribosyltransferase-isomerase (354 aa).

The protein belongs to the QueA family. Monomer.

It is found in the cytoplasm. The enzyme catalyses 7-aminomethyl-7-carbaguanosine(34) in tRNA + S-adenosyl-L-methionine = epoxyqueuosine(34) in tRNA + adenine + L-methionine + 2 H(+). It functions in the pathway tRNA modification; tRNA-queuosine biosynthesis. Its function is as follows. Transfers and isomerizes the ribose moiety from AdoMet to the 7-aminomethyl group of 7-deazaguanine (preQ1-tRNA) to give epoxyqueuosine (oQ-tRNA). The sequence is that of S-adenosylmethionine:tRNA ribosyltransferase-isomerase from Salmonella gallinarum (strain 287/91 / NCTC 13346).